The primary structure comprises 466 residues: FBD-associated F-box protein At5g22730 (466 aa).

The 54-residue stretch at 27 to 80 (EDLISKLPDSLITQILLYLPIKDIVRTSSLSSRWKSLWLLIPRLDLDSEEFQDY) folds into the F-box domain. The 52-residue stretch at 385–436 (DEPIIFSSVPRCLVSSLESVEIKKFNGRPAKMEVARYFLENSGVLQKLVLHL) folds into the FBD domain.

This is FBD-associated F-box protein At5g22730 from Arabidopsis thaliana (Mouse-ear cress).